The chain runs to 391 residues: Nuclear hormone receptor family member nhr-218 (391 aa).

The nuclear receptor DNA-binding region spans 17-93 (PIPCQICTYQ…MGMKAEKIQQ (77 aa)). 2 consecutive NR C4-type zinc fingers follow at residues 20–40 (CQICTYQSHGVNFNVMTCRAC) and 56–76 (CKTRKNDCRIDSTERHFCRLC). The NR LBD domain occupies 146-391 (SRNYSDSPLT…DNFCNLFAMK (246 aa)).

Belongs to the nuclear hormone receptor family.

The protein localises to the nucleus. Functionally, orphan nuclear receptor. This Caenorhabditis elegans protein is Nuclear hormone receptor family member nhr-218 (nhr-218).